The chain runs to 121 residues: uncharacterized protein (121 aa).

This is an uncharacterized protein from Streptococcus pyogenes serotype M6 (strain ATCC BAA-946 / MGAS10394).